We begin with the raw amino-acid sequence, 1027 residues long: MGVGDGRDQYELAAMSEQSGKKKSKNKKEKKEKDMDELKKEVDLDDHKLSLEELHHKYGTDLSKGLSNSRAEEILARDGPNALTPPPTTPEWVKFCKQMFGGFSMLLWTGAVLCFLAYGILAAMEDEPANDNLYLGVVLSAVVIITGCFSYYQDAKSSKIMDSFKNLVPQQALVVRDGEKKQINAEEVVIGDLVEVKGGDRIPADLRIISSHGCKVDNSSLTGESEPQTRSPDFSNDNPLETKNIAFFSTNCVEGTARGIVISTGDRTVMGRIATLASGLEVGRTPISIEIEHFIHIITGVAVFLGVSFLLLSLVLGYSWLEAVIFLIGIIVANVPEGLLATVTVCLTLTAKRMAKKNCLVKNLEAVETLGSTSTICSDKTGTLTQNRMTVAHMWFDNQIHEADTTENQSGTSFDRSSDTWASLARIAGLCNRAVFLAEQIDVPILKRDVAGDASESALLKCIELCCGSVKEMREKFTKVAEIPFNSTNKYQLSVHKIPSGGKESQHLLVMKGAPERILDRCATIMIQGKEQLLDDEIKESFQNAYLELGGLGERVLGFCHFYLPDEQFPEGFQFDADDVNFPTENLCFVGLMSMIDPPRAAVPDAVGKCRSAGIKVIMVTGDHPITAKAIAKGVGIISEGNETVEDIAARLNIPVNEVNPRDAKACVVHGGDLKDLSCEQLDDILKYHTEIVFARTSPQQKLIIVEGCQRTGAIVAVTGDGVNDSPALKKADIGVAMGIAGSDVSKQAADMILLDDNFASIVTGVEEGRLIFDNLKKSIAYTLTSNIPEITPFLFFIIANIPLPLGTVTILCIDLGTDMLPAISLAYEAAESDIMKRQPRNPKTDKLVNERLISIAYGQIGMIQALAGFFTYFVILAENGFLPPRLLGIRMNWDDKYINDLEDSYGQQWTYEQRKIVEFTCHTAFFTSIVIVQWADLIICKTRRNSVFQQGMKNKILIFGLFEETALAAFLSYCPGMDVALRMYPLKPNWWFCAFPYSLLIFIYDEIRKLILRRNPGGWMERETYY.

A propeptide spanning residues 1-5 is cleaved from the precursor; it reads MGVGD. The span at 1 to 10 shows a compositional bias: basic and acidic residues; the sequence is MGVGDGRDQY. The segment at 1-39 is disordered; that stretch reads MGVGDGRDQYELAAMSEQSGKKKSKNKKEKKEKDMDELK. Topologically, residues 6 to 90 are cytoplasmic; that stretch reads GRDQYELAAM…NALTPPPTTP (85 aa). Ser-16 bears the Phosphoserine; by PKC mark. Positions 29–39 are enriched in basic and acidic residues; the sequence is EKKEKDMDELK. The tract at residues 85-87 is interaction with phosphoinositide-3 kinase; the sequence is PPP. A helical membrane pass occupies residues 91–111; sequence EWVKFCKQMFGGFSMLLWTGA. The Extracellular portion of the chain corresponds to 112–134; the sequence is VLCFLAYGILAAMEDEPANDNLY. Residues 135-155 traverse the membrane as a helical segment; that stretch reads LGVVLSAVVIITGCFSYYQDA. Residues 156–291 lie on the Cytoplasmic side of the membrane; sequence KSSKIMDSFK…VGRTPISIEI (136 aa). A disordered region spans residues 217-238; sequence DNSSLTGESEPQTRSPDFSNDN. A helical transmembrane segment spans residues 292–311; the sequence is EHFIHIITGVAVFLGVSFLL. At 312–323 the chain is on the extracellular side; the sequence is LSLVLGYSWLEA. The chain crosses the membrane as a helical span at residues 324 to 341; it reads VIFLIGIIVANVPEGLLA. At 342 to 776 the chain is on the cytoplasmic side; that stretch reads TVTVCLTLTA…EEGRLIFDNL (435 aa). The 4-aspartylphosphate intermediate role is filled by Asp-379. ATP is bound at residue Lys-490. Asp-721 and Asp-725 together coordinate Mg(2+). Residues 777 to 796 traverse the membrane as a helical segment; the sequence is KKSIAYTLTSNIPEITPFLF. Over 797-806 the chain is Extracellular; the sequence is FIIANIPLPL. A helical transmembrane segment spans residues 807-827; it reads GTVTILCIDLGTDMLPAISLA. Residues 828–847 lie on the Cytoplasmic side of the membrane; it reads YEAAESDIMKRQPRNPKTDK. A helical transmembrane segment spans residues 848–870; the sequence is LVNERLISIAYGQIGMIQALAGF. Residues 871–922 lie on the Extracellular side of the membrane; the sequence is FTYFVILAENGFLPPRLLGIRMNWDDKYINDLEDSYGQQWTYEQRKIVEFTC. Residues 923–942 form a helical membrane-spanning segment; that stretch reads HTAFFTSIVIVQWADLIICK. The Cytoplasmic segment spans residues 943–955; the sequence is TRRNSVFQQGMKN. Ser-947 carries the post-translational modification Phosphoserine; by PKA. The chain crosses the membrane as a helical span at residues 956–974; the sequence is KILIFGLFEETALAAFLSY. Residues 975–989 lie on the Extracellular side of the membrane; sequence CPGMDVALRMYPLKP. Residues 990 to 1010 form a helical membrane-spanning segment; the sequence is NWWFCAFPYSLLIFIYDEIRK. At 1011 to 1027 the chain is on the cytoplasmic side; the sequence is LILRRNPGGWMERETYY.

This sequence belongs to the cation transport ATPase (P-type) (TC 3.A.3) family. Type IIC subfamily. The sodium/potassium-transporting ATPase is composed of a catalytic alpha subunit, an auxiliary non-catalytic beta subunit and an additional regulatory subunit.

The protein resides in the cell membrane. Its subcellular location is the sarcolemma. The catalysed reaction is K(+)(out) + Na(+)(in) + ATP + H2O = K(+)(in) + Na(+)(out) + ADP + phosphate + H(+). Its function is as follows. This is the catalytic component of the active enzyme, which catalyzes the hydrolysis of ATP coupled with the exchange of sodium and potassium ions across the plasma membrane. This action creates the electrochemical gradient of sodium and potassium ions, providing the energy for active transport of various nutrients. In Catostomus commersonii (White sucker), this protein is Sodium/potassium-transporting ATPase subunit alpha-1 (atp1a1).